Here is a 456-residue protein sequence, read N- to C-terminus: General transcription factor IIE subunit 1 (456 aa).

The region spanning 11–100 (LDDLVKMVIR…LWYIDYKHII (90 aa)) is the HTH TFE/IIEalpha-type domain. The C4-type zinc-finger motif lies at 129-157 (CQTCHKVYTALDIPKLLNMDTGALACEIC). Positions 345–402 (ESAPDSGDADGNGSNSGSGGSTIEGNDGGNGEHQNKKMKLDDSQTVSSMSQSDDDGKD) are disordered. The segment covering 347–357 (APDSGDADGNG) has biased composition (low complexity). The span at 358 to 375 (SNSGSGGSTIEGNDGGNG) shows a compositional bias: gly residues. Basic and acidic residues predominate over residues 377–386 (HQNKKMKLDD).

This sequence belongs to the TFIIE alpha subunit family. In terms of assembly, TFIIE is a tetramer of two alpha and two beta subunits.

It localises to the nucleus. Recruits TFIIH to the initiation complex and stimulates the RNA polymerase II C-terminal domain kinase and DNA-dependent ATPase activities of TFIIH. Both TFIIH and TFIIE are required for promoter clearance by RNA polymerase. The sequence is that of General transcription factor IIE subunit 1 (gtf2e1-1) from Dictyostelium discoideum (Social amoeba).